Reading from the N-terminus, the 74-residue chain is Anaphase-promoting complex subunit 13 (74 aa).

The segment at 33-56 (LSELPEPEQDNGGTTESVKEQEMK) is disordered.

This sequence belongs to the APC13 family. In terms of assembly, the mammalian APC/C is composed at least of 14 distinct subunits ANAPC1, ANAPC2, CDC27/APC3, ANAPC4, ANAPC5, CDC16/APC6, ANAPC7, CDC23/APC8, ANAPC10, ANAPC11, CDC26/APC12, ANAPC13, ANAPC15 and ANAPC16 that assemble into a complex of at least 19 chains with a combined molecular mass of around 1.2 MDa; APC/C interacts with FZR1 and FBXO5.

It is found in the nucleus. Its pathway is protein modification; protein ubiquitination. Functionally, component of the anaphase promoting complex/cyclosome (APC/C), a cell cycle-regulated E3 ubiquitin ligase that controls progression through mitosis and the G1 phase of the cell cycle. The APC/C complex acts by mediating ubiquitination and subsequent degradation of target proteins: it mainly mediates the formation of 'Lys-11'-linked polyubiquitin chains and, to a lower extent, the formation of 'Lys-48'- and 'Lys-63'-linked polyubiquitin chains. The APC/C complex catalyzes assembly of branched 'Lys-11'-/'Lys-48'-linked branched ubiquitin chains on target proteins. The polypeptide is Anaphase-promoting complex subunit 13 (Anapc13) (Mus musculus (Mouse)).